We begin with the raw amino-acid sequence, 321 residues long: Tetraacyldisaccharide 4'-kinase (321 aa).

Position 54–61 (54–61 (SVGGTGKT)) interacts with ATP.

It belongs to the LpxK family.

The enzyme catalyses a lipid A disaccharide + ATP = a lipid IVA + ADP + H(+). It participates in glycolipid biosynthesis; lipid IV(A) biosynthesis; lipid IV(A) from (3R)-3-hydroxytetradecanoyl-[acyl-carrier-protein] and UDP-N-acetyl-alpha-D-glucosamine: step 6/6. Its function is as follows. Transfers the gamma-phosphate of ATP to the 4'-position of a tetraacyldisaccharide 1-phosphate intermediate (termed DS-1-P) to form tetraacyldisaccharide 1,4'-bis-phosphate (lipid IVA). In Rickettsia conorii (strain ATCC VR-613 / Malish 7), this protein is Tetraacyldisaccharide 4'-kinase.